The following is a 227-amino-acid chain: uncharacterized protein (227 aa).

An RCK N-terminal domain is found at 3–119 (RADFCIIGLG…STMGIREALI (117 aa)). Residues 134-221 (HGLENEIINL…LNKYLNYINP (88 aa)) form the RCK C-terminal domain.

This is an uncharacterized protein from Mycoplasma genitalium (strain ATCC 33530 / DSM 19775 / NCTC 10195 / G37) (Mycoplasmoides genitalium).